The chain runs to 454 residues: Bifunctional protein GlmU (454 aa).

Residues 1–232 are pyrophosphorylase; it reads MTDRTCLSIV…VDNVIGINNR (232 aa). Residues 11 to 14, Lys-25, Gln-78, and 83 to 84 contribute to the UDP-N-acetyl-alpha-D-glucosamine site; these read LAAG and GT. Asp-108 contacts Mg(2+). UDP-N-acetyl-alpha-D-glucosamine-binding residues include Gly-144, Glu-158, Asn-173, and Asn-230. Residue Asn-230 coordinates Mg(2+). The segment at 233 to 253 is linker; it reads AELAEAETIWQNRKRRELMLS. The N-acetyltransferase stretch occupies residues 254 to 454; that stretch reads GVTLIAPETV…AIKAAKSVSK (201 aa). UDP-N-acetyl-alpha-D-glucosamine contacts are provided by Arg-319 and Lys-337. The active-site Proton acceptor is His-349. Residues Tyr-352 and Asn-363 each contribute to the UDP-N-acetyl-alpha-D-glucosamine site. Residues Ala-366, 372-373, Ser-391, Ser-409, and Arg-426 contribute to the acetyl-CoA site; that span reads NY.

This sequence in the N-terminal section; belongs to the N-acetylglucosamine-1-phosphate uridyltransferase family. In the C-terminal section; belongs to the transferase hexapeptide repeat family. As to quaternary structure, homotrimer. Mg(2+) is required as a cofactor.

The protein resides in the cytoplasm. The catalysed reaction is alpha-D-glucosamine 1-phosphate + acetyl-CoA = N-acetyl-alpha-D-glucosamine 1-phosphate + CoA + H(+). The enzyme catalyses N-acetyl-alpha-D-glucosamine 1-phosphate + UTP + H(+) = UDP-N-acetyl-alpha-D-glucosamine + diphosphate. The protein operates within nucleotide-sugar biosynthesis; UDP-N-acetyl-alpha-D-glucosamine biosynthesis; N-acetyl-alpha-D-glucosamine 1-phosphate from alpha-D-glucosamine 6-phosphate (route II): step 2/2. Its pathway is nucleotide-sugar biosynthesis; UDP-N-acetyl-alpha-D-glucosamine biosynthesis; UDP-N-acetyl-alpha-D-glucosamine from N-acetyl-alpha-D-glucosamine 1-phosphate: step 1/1. It functions in the pathway bacterial outer membrane biogenesis; LPS lipid A biosynthesis. Catalyzes the last two sequential reactions in the de novo biosynthetic pathway for UDP-N-acetylglucosamine (UDP-GlcNAc). The C-terminal domain catalyzes the transfer of acetyl group from acetyl coenzyme A to glucosamine-1-phosphate (GlcN-1-P) to produce N-acetylglucosamine-1-phosphate (GlcNAc-1-P), which is converted into UDP-GlcNAc by the transfer of uridine 5-monophosphate (from uridine 5-triphosphate), a reaction catalyzed by the N-terminal domain. The chain is Bifunctional protein GlmU from Brucella melitensis biotype 1 (strain ATCC 23456 / CCUG 17765 / NCTC 10094 / 16M).